The primary structure comprises 588 residues: Aspartate--tRNA(Asp/Asn) ligase (588 aa).

Glu172 contributes to the L-aspartate binding site. The interval 196–199 (QLFK) is aspartate. Arg218 provides a ligand contact to L-aspartate. ATP-binding positions include 218 to 220 (RDE) and Gln227. His450 serves as a coordination point for L-aspartate. Residue Glu484 participates in ATP binding. Arg491 contributes to the L-aspartate binding site. 536–539 (GLDR) contacts ATP.

The protein belongs to the class-II aminoacyl-tRNA synthetase family. Type 1 subfamily. In terms of assembly, homodimer.

Its subcellular location is the cytoplasm. It carries out the reaction tRNA(Asx) + L-aspartate + ATP = L-aspartyl-tRNA(Asx) + AMP + diphosphate. Its function is as follows. Aspartyl-tRNA synthetase with relaxed tRNA specificity since it is able to aspartylate not only its cognate tRNA(Asp) but also tRNA(Asn). Reaction proceeds in two steps: L-aspartate is first activated by ATP to form Asp-AMP and then transferred to the acceptor end of tRNA(Asp/Asn). The sequence is that of Aspartate--tRNA(Asp/Asn) ligase from Nitrosospira multiformis (strain ATCC 25196 / NCIMB 11849 / C 71).